The primary structure comprises 441 residues: Glutamyl-tRNA reductase (441 aa).

Residues 49-52, serine 109, 114-116, and glutamine 120 each bind substrate; these read TCNR and EDQ. The active-site Nucleophile is the cysteine 50. 190–195 provides a ligand contact to NADP(+); sequence GAGKMS.

Belongs to the glutamyl-tRNA reductase family. In terms of assembly, homodimer.

It catalyses the reaction (S)-4-amino-5-oxopentanoate + tRNA(Glu) + NADP(+) = L-glutamyl-tRNA(Glu) + NADPH + H(+). It participates in porphyrin-containing compound metabolism; protoporphyrin-IX biosynthesis; 5-aminolevulinate from L-glutamyl-tRNA(Glu): step 1/2. Catalyzes the NADPH-dependent reduction of glutamyl-tRNA(Glu) to glutamate 1-semialdehyde (GSA). The chain is Glutamyl-tRNA reductase from Moorella thermoacetica (strain ATCC 39073 / JCM 9320).